Reading from the N-terminus, the 465-residue chain is Cysteine--tRNA ligase 2 (465 aa).

A Zn(2+)-binding site is contributed by Cys30. The 'HIGH' region motif lies at 32–42 (ITVYDYCHVGH). Cys214, His239, and Glu243 together coordinate Zn(2+). The 'KMSKS' region signature appears at 271–275 (KMSKS). Lys274 serves as a coordination point for ATP.

This sequence belongs to the class-I aminoacyl-tRNA synthetase family. Monomer. It depends on Zn(2+) as a cofactor.

The protein resides in the cytoplasm. The enzyme catalyses tRNA(Cys) + L-cysteine + ATP = L-cysteinyl-tRNA(Cys) + AMP + diphosphate. The polypeptide is Cysteine--tRNA ligase 2 (Burkholderia lata (strain ATCC 17760 / DSM 23089 / LMG 22485 / NCIMB 9086 / R18194 / 383)).